Consider the following 260-residue polypeptide: 5'-nucleotidase SurE (260 aa).

A divalent metal cation is bound by residues Asp-8, Asp-9, Ser-39, and Asn-96.

The protein belongs to the SurE nucleotidase family. It depends on a divalent metal cation as a cofactor.

It localises to the cytoplasm. The enzyme catalyses a ribonucleoside 5'-phosphate + H2O = a ribonucleoside + phosphate. Functionally, nucleotidase that shows phosphatase activity on nucleoside 5'-monophosphates. This is 5'-nucleotidase SurE from Moorella thermoacetica (strain ATCC 39073 / JCM 9320).